The sequence spans 207 residues: Large ribosomal subunit protein uL4 (207 aa).

Positions 48-70 are disordered; it reads KAQKTRSEVSGGGAKPWRQKGTG.

It belongs to the universal ribosomal protein uL4 family. As to quaternary structure, part of the 50S ribosomal subunit.

Its function is as follows. One of the primary rRNA binding proteins, this protein initially binds near the 5'-end of the 23S rRNA. It is important during the early stages of 50S assembly. It makes multiple contacts with different domains of the 23S rRNA in the assembled 50S subunit and ribosome. In terms of biological role, forms part of the polypeptide exit tunnel. This Francisella tularensis subsp. holarctica (strain FTNF002-00 / FTA) protein is Large ribosomal subunit protein uL4.